Reading from the N-terminus, the 361-residue chain is Methionine import ATP-binding protein MetN (361 aa).

An ABC transporter domain is found at 22-257 (VRLIDVKRRF…PQTDITRSLL (236 aa)). 54-61 (GRSGAGKS) contacts ATP.

It belongs to the ABC transporter superfamily. Methionine importer (TC 3.A.1.24) family. In terms of assembly, the complex is composed of two ATP-binding proteins (MetN), two transmembrane proteins (MetI) and a solute-binding protein (MetQ).

It is found in the cell inner membrane. The catalysed reaction is L-methionine(out) + ATP + H2O = L-methionine(in) + ADP + phosphate + H(+). It catalyses the reaction D-methionine(out) + ATP + H2O = D-methionine(in) + ADP + phosphate + H(+). Functionally, part of the ABC transporter complex MetNIQ involved in methionine import. Responsible for energy coupling to the transport system. The chain is Methionine import ATP-binding protein MetN from Rhizobium etli (strain ATCC 51251 / DSM 11541 / JCM 21823 / NBRC 15573 / CFN 42).